A 91-amino-acid chain; its full sequence is Elongation factor 1-beta (91 aa).

As to quaternary structure, homodimer.

In terms of biological role, promotes the exchange of GDP for GTP in EF-1-alpha/GDP, thus allowing the regeneration of EF-1-alpha/GTP that could then be used to form the ternary complex EF-1-alpha/GTP/AAtRNA. The polypeptide is Elongation factor 1-beta (ef1b) (Saccharolobus solfataricus (strain ATCC 35092 / DSM 1617 / JCM 11322 / P2) (Sulfolobus solfataricus)).